A 263-amino-acid polypeptide reads, in one-letter code: 3-deoxy-manno-octulosonate cytidylyltransferase 1 (263 aa).

This sequence belongs to the KdsB family.

It is found in the cytoplasm. It catalyses the reaction 3-deoxy-alpha-D-manno-oct-2-ulosonate + CTP = CMP-3-deoxy-beta-D-manno-octulosonate + diphosphate. The protein operates within nucleotide-sugar biosynthesis; CMP-3-deoxy-D-manno-octulosonate biosynthesis; CMP-3-deoxy-D-manno-octulosonate from 3-deoxy-D-manno-octulosonate and CTP: step 1/1. It participates in bacterial outer membrane biogenesis; lipopolysaccharide biosynthesis. In terms of biological role, activates KDO (a required 8-carbon sugar) for incorporation into bacterial lipopolysaccharide in Gram-negative bacteria. This is 3-deoxy-manno-octulosonate cytidylyltransferase 1 from Burkholderia ambifaria (strain MC40-6).